The primary structure comprises 206 residues: Pyridoxal 5'-phosphate synthase subunit PdxT (206 aa).

Position 59–61 (59–61) interacts with L-glutamine; it reads GES. The active-site Nucleophile is Cys-91. Residues Arg-123 and 151 to 152 each bind L-glutamine; that span reads IR. Active-site charge relay system residues include His-187 and Glu-189.

This sequence belongs to the glutaminase PdxT/SNO family. In terms of assembly, in the presence of PdxS, forms a dodecamer of heterodimers. Only shows activity in the heterodimer.

The enzyme catalyses aldehydo-D-ribose 5-phosphate + D-glyceraldehyde 3-phosphate + L-glutamine = pyridoxal 5'-phosphate + L-glutamate + phosphate + 3 H2O + H(+). It carries out the reaction L-glutamine + H2O = L-glutamate + NH4(+). Its pathway is cofactor biosynthesis; pyridoxal 5'-phosphate biosynthesis. In terms of biological role, catalyzes the hydrolysis of glutamine to glutamate and ammonia as part of the biosynthesis of pyridoxal 5'-phosphate. The resulting ammonia molecule is channeled to the active site of PdxS. The sequence is that of Pyridoxal 5'-phosphate synthase subunit PdxT from Mycobacterium sp. (strain JLS).